A 150-amino-acid polypeptide reads, in one-letter code: Globin-3 (150 aa).

The region spanning 11 to 150 (PLTAADKTKI…IICILLNSAY (140 aa)) is the Globin domain. Residues His-74 and His-106 each coordinate heme b.

This sequence belongs to the globin family. Monomer.

This Mordacia mordax (Southern hemisphere lamprey) protein is Globin-3.